A 384-amino-acid chain; its full sequence is 8-amino-7-oxononanoate synthase (384 aa).

A substrate-binding site is contributed by R21. Residue 108 to 109 (GF) coordinates pyridoxal 5'-phosphate. H133 serves as a coordination point for substrate. Residues S179, H207, and T233 each coordinate pyridoxal 5'-phosphate. K236 is subject to N6-(pyridoxal phosphate)lysine. Residue T352 coordinates substrate.

The protein belongs to the class-II pyridoxal-phosphate-dependent aminotransferase family. BioF subfamily. In terms of assembly, homodimer. Pyridoxal 5'-phosphate is required as a cofactor.

It catalyses the reaction 6-carboxyhexanoyl-[ACP] + L-alanine + H(+) = (8S)-8-amino-7-oxononanoate + holo-[ACP] + CO2. It functions in the pathway cofactor biosynthesis; biotin biosynthesis. In terms of biological role, catalyzes the decarboxylative condensation of pimeloyl-[acyl-carrier protein] and L-alanine to produce 8-amino-7-oxononanoate (AON), [acyl-carrier protein], and carbon dioxide. The chain is 8-amino-7-oxononanoate synthase from Shigella sonnei (strain Ss046).